The sequence spans 512 residues: Ammonium transporter 2 (512 aa).

Residues 1-47 are Extracellular-facing; that stretch reads MSSVNSIPTATSTVYISVLPATATPSGGSGGNVLHEDLNKFYDYGNT. The chain crosses the membrane as a helical span at residues 48–68; that stretch reads SWILACTPLCLIMVPGVAFFY. The Cytoplasmic segment spans residues 69-77; the sequence is SGLARRKNT. The helical transmembrane segment at 78–98 threads the bilayer; it reads LALIMLSMLGLCVSFFQWYFW. Topologically, residues 99 to 137 are extracellular; sequence GYSLAFSQTGTSGYIGNLRHFAFIRTLADYSPGSNNIPE. Residues 138–158 traverse the membrane as a helical segment; sequence LVFANFQGMFAAITVALFTGA. Topologically, residues 159–167 are cytoplasmic; that stretch reads AAERGRIGP. Residues 168 to 188 form a helical membrane-spanning segment; the sequence is MLIITFVWLTVVYCPIACWIW. The Extracellular portion of the chain corresponds to 189 to 201; the sequence is NPNGWAFKFGVYD. A helical transmembrane segment spans residues 202-222; it reads FAGGGPVEVGSGFAALAYTVC. Residues 223–238 are Cytoplasmic-facing; sequence LGRRSKFVEEQFRPHS. The helical transmembrane segment at 239–259 threads the bilayer; that stretch reads VLNVVLGTSLLWFGWLGFNGG. Topologically, residues 260–267 are extracellular; that stretch reads SAYGSNLR. A helical transmembrane segment spans residues 268–288; it reads AAMAITNTNLAGAVAGLVWVI. The Cytoplasmic portion of the chain corresponds to 289 to 300; the sequence is YDYIFRTRKWST. The chain crosses the membrane as a helical span at residues 301-321; it reads IGFCSGVVAGLVAATPCAGFV. Ser322 is a topological domain (extracellular). Residues 323–343 form a helical membrane-spanning segment; it reads PHASLAIGAITGLCCNWAIKL. Topologically, residues 344–354 are cytoplasmic; the sequence is KSHMRIDDAMD. Residues 355–375 traverse the membrane as a helical segment; it reads IFAIHGVAGFVGTFLNGLFAV. The Extracellular segment spans residues 376-406; it reads DYIAAMDGIYVGENKIRGGWFDHHWRQLGLQ. The chain crosses the membrane as a helical span at residues 407 to 427; the sequence is MAYICAVGAYDFVVTFIILFI. The Cytoplasmic portion of the chain corresponds to 428–512; it reads TDKIPYLQLR…TNPLELGLTI (85 aa).

The protein belongs to the ammonia transporter channel (TC 1.A.11.2) family.

The protein localises to the membrane. In terms of biological role, transporter for ammonium to use as a nitrogen source. This Schizosaccharomyces pombe (strain 972 / ATCC 24843) (Fission yeast) protein is Ammonium transporter 2 (amt2).